Reading from the N-terminus, the 637-residue chain is ATP-dependent rRNA helicase SPB4 (637 aa).

Residues 10–38 carry the Q motif motif; it reads WENLRVDLEPWLKDAIRSLNYPTMTPVQA. The Helicase ATP-binding domain maps to 41 to 236; the sequence is IPLLSGNKDV…RTGMNNPVKL (196 aa). 54–61 lines the ATP pocket; it reads AVTGSGKT. The short motif at 184 to 187 is the DEAD box element; the sequence is DEAD. The Helicase C-terminal domain maps to 266–444; that stretch reads KLTTMLQMLR…KFQKKLRKYM (179 aa). Residues 528-597 adopt a coiled-coil conformation; sequence SAEKARLENL…QLEAEQERGG (70 aa). A disordered region spans residues 554-637; that stretch reads LKVKNEAWSS…GVLQGSFDDL (84 aa). 2 stretches are compositionally biased toward basic and acidic residues: residues 564–576 and 583–598; these read KTEK…ERKE and EAIE…RGGL. Gly residues predominate over residues 621-630; sequence NGGGGGGGVL.

This sequence belongs to the DEAD box helicase family. DDX55/SPB4 subfamily. In terms of assembly, component of pre-60S ribosomal complexes.

The protein resides in the nucleus. Its subcellular location is the nucleolus. It catalyses the reaction ATP + H2O = ADP + phosphate + H(+). ATP-binding RNA helicase involved in the biogenesis of 60S ribosomal subunits. Binds 90S pre-ribosomal particles and dissociates from pre-60S ribosomal particles after processing of 27SB pre-rRNA. Required for the normal formation of 18S rRNA through the processing of pre-rRNAs at sites A0, A1 and A2, and the normal formation of 25S and 5.8S rRNAs through the processing of pre-rRNAs at sites C1 and C2. The polypeptide is ATP-dependent rRNA helicase SPB4 (Lodderomyces elongisporus (strain ATCC 11503 / CBS 2605 / JCM 1781 / NBRC 1676 / NRRL YB-4239) (Yeast)).